The following is a 189-amino-acid chain: Large ribosomal subunit protein eL18 (189 aa).

It belongs to the eukaryotic ribosomal protein eL18 family.

It is found in the cytoplasm. The chain is Large ribosomal subunit protein eL18 (RpL18) from Aedes aegypti (Yellowfever mosquito).